Here is a 315-residue protein sequence, read N- to C-terminus: MNLAYIPSPTFSKFEIGPFTIHMYAICILIGICVAVWILTTRWKRYGGTFDQILDTTLVTVPCALVGARLYHCITTPADYFPPTGNLVNILKVWEGGMAIFGGISVGTLVAFLWCRHKHYPFAIFADAIAPALPVAQAIGRLGNWFNQELYGWPTTLPWGLKLNDADAIGKSEICYSGAQCPDYRTTLFHPTFLYEMIWNLIGAALIIYLGHKLADRLKAGQQFAMYLMWYGLGRTWIENVRINYSTVILGLRTNVWTAIIVFVLGCILFVVLYQYGPDPKAQARGLAAVTADELERQSIEEEQLRQKKQAKRTK.

2 consecutive transmembrane segments (helical) span residues 19–39 (FTIH…VWIL) and 93–113 (VWEG…VAFL). Residue Arg-141 coordinates a 1,2-diacyl-sn-glycero-3-phospho-(1'-sn-glycerol). The next 2 membrane-spanning stretches (helical) occupy residues 188-208 (LFHP…ALII) and 256-276 (VWTA…LYQY).

This sequence belongs to the Lgt family.

The protein localises to the cell membrane. It carries out the reaction L-cysteinyl-[prolipoprotein] + a 1,2-diacyl-sn-glycero-3-phospho-(1'-sn-glycerol) = an S-1,2-diacyl-sn-glyceryl-L-cysteinyl-[prolipoprotein] + sn-glycerol 1-phosphate + H(+). Its pathway is protein modification; lipoprotein biosynthesis (diacylglyceryl transfer). Catalyzes the transfer of the diacylglyceryl group from phosphatidylglycerol to the sulfhydryl group of the N-terminal cysteine of a prolipoprotein, the first step in the formation of mature lipoproteins. The protein is Phosphatidylglycerol--prolipoprotein diacylglyceryl transferase of Bifidobacterium longum (strain DJO10A).